Here is a 268-residue protein sequence, read N- to C-terminus: Secreted RxLR effector protein 6 (268 aa).

A signal peptide spans 1–19 (MRGAFYIAIALLVVRSRTA). A RxLR-dEER motif is present at residues 48-63 (RYLRDGLAHSAANEER). Residues 90–123 (IGGHSHTPKSKRKVNLSPAKSQSGIRKKSTSINK) form a disordered region. The segment covering 107 to 123 (PAKSQSGIRKKSTSINK) has biased composition (polar residues).

It belongs to the RxLR effector family.

Its subcellular location is the secreted. It is found in the host nucleus. It localises to the host cytoplasm. In terms of biological role, secreted effector that completely suppresses the host cell death induced by cell death-inducing proteins. This Plasmopara viticola (Downy mildew of grapevine) protein is Secreted RxLR effector protein 6.